We begin with the raw amino-acid sequence, 246 residues long: Small ribosomal subunit protein uS2 (246 aa).

Positions 224 to 246 are disordered; the sequence is AKQGEESAETEAKEAETTETTTA. Residues 225 to 239 show a composition bias toward basic and acidic residues; the sequence is KQGEESAETEAKEAE.

The protein belongs to the universal ribosomal protein uS2 family.

The protein is Small ribosomal subunit protein uS2 of Bacillus licheniformis (strain ATCC 14580 / DSM 13 / JCM 2505 / CCUG 7422 / NBRC 12200 / NCIMB 9375 / NCTC 10341 / NRRL NRS-1264 / Gibson 46).